We begin with the raw amino-acid sequence, 354 residues long: Uroporphyrinogen decarboxylase (354 aa).

Residues 27–31 (RQAGR), phenylalanine 46, aspartate 77, tyrosine 154, threonine 209, and histidine 327 each bind substrate.

This sequence belongs to the uroporphyrinogen decarboxylase family. As to quaternary structure, homodimer.

It is found in the cytoplasm. It catalyses the reaction uroporphyrinogen III + 4 H(+) = coproporphyrinogen III + 4 CO2. Its pathway is porphyrin-containing compound metabolism; protoporphyrin-IX biosynthesis; coproporphyrinogen-III from 5-aminolevulinate: step 4/4. In terms of biological role, catalyzes the decarboxylation of four acetate groups of uroporphyrinogen-III to yield coproporphyrinogen-III. This is Uroporphyrinogen decarboxylase from Salmonella typhi.